The chain runs to 339 residues: Biotin synthase (339 aa).

A Radical SAM core domain is found at 51–278 (TEVELATLLS…KARVRLSAGR (228 aa)). 3 residues coordinate [4Fe-4S] cluster: Cys-66, Cys-70, and Cys-73. [2Fe-2S] cluster contacts are provided by Cys-110, Cys-141, Cys-201, and Arg-273.

This sequence belongs to the radical SAM superfamily. Biotin synthase family. As to quaternary structure, homodimer. [4Fe-4S] cluster serves as cofactor. [2Fe-2S] cluster is required as a cofactor.

It carries out the reaction (4R,5S)-dethiobiotin + (sulfur carrier)-SH + 2 reduced [2Fe-2S]-[ferredoxin] + 2 S-adenosyl-L-methionine = (sulfur carrier)-H + biotin + 2 5'-deoxyadenosine + 2 L-methionine + 2 oxidized [2Fe-2S]-[ferredoxin]. The protein operates within cofactor biosynthesis; biotin biosynthesis; biotin from 7,8-diaminononanoate: step 2/2. Catalyzes the conversion of dethiobiotin (DTB) to biotin by the insertion of a sulfur atom into dethiobiotin via a radical-based mechanism. The polypeptide is Biotin synthase (Janthinobacterium sp. (strain Marseille) (Minibacterium massiliensis)).